The following is a 71-amino-acid chain: Small ribosomal subunit protein bS21 (71 aa).

Belongs to the bacterial ribosomal protein bS21 family.

In Dichelobacter nodosus (strain VCS1703A), this protein is Small ribosomal subunit protein bS21.